Here is a 510-residue protein sequence, read N- to C-terminus: Ent-sandaracopimaradiene 3-hydroxylase (510 aa).

Residues 4 to 24 (MLVAGAGAAAVAAVGGLVAAA) form a helical membrane-spanning segment. Cys-454 serves as a coordination point for heme.

This sequence belongs to the cytochrome P450 family. In terms of assembly, interacts with the rice dwarf virus (RDV) P2 protein. Heme is required as a cofactor. Expressed in leaf blades and sheaths, stems and panicles.

It localises to the membrane. The enzyme catalyses ent-sandaracopimara-8(14),15-diene + reduced [NADPH--hemoprotein reductase] + O2 = ent-sandaracopimaradien-3beta-ol + oxidized [NADPH--hemoprotein reductase] + H2O + H(+). It carries out the reaction 9beta-pimara-7,15-diene + reduced [NADPH--hemoprotein reductase] + O2 = 9beta-pimara-7,15-diene-3beta-ol + oxidized [NADPH--hemoprotein reductase] + H2O + H(+). In terms of biological role, catalyzes the hydroxylation of ent-sandaracopimaradiene at the C3alpha position to produce ent-3beta-hydroxy-sandaracopimaradiene, an intermediates for the biosynthesis of oryzalexin D and oryzalexin E phytoalexins. Catalyzes the hydroxylation of ent-cassadiene at the C3alpha position to produce 3alpha-hydroxy-ent-cassadiene, which may be an intermediate for the biosynthesis of phytocassane phytoalexins. Catalyzes the hydroxylation of syn-pimaradiene (9-beta-pimara-7,15-diene) at the C3beta position to produce 3-beta-syn-pimaradiene. Can hydroxylate ent-kaurene in vitro, but the product is not ent-kauren-19-ol as expected for ent-kaurene oxidase activity. This Oryza sativa subsp. japonica (Rice) protein is Ent-sandaracopimaradiene 3-hydroxylase.